A 218-amino-acid polypeptide reads, in one-letter code: 3-dehydroquinate dehydratase (218 aa).

3-dehydroquinate-binding positions include 29-31 and R56; that span reads EFR. The active-site Proton donor/acceptor is the H116. K142 functions as the Schiff-base intermediate with substrate in the catalytic mechanism. R180, S200, and Q204 together coordinate 3-dehydroquinate.

It belongs to the type-I 3-dehydroquinase family. Homodimer.

The enzyme catalyses 3-dehydroquinate = 3-dehydroshikimate + H2O. Its pathway is metabolic intermediate biosynthesis; chorismate biosynthesis; chorismate from D-erythrose 4-phosphate and phosphoenolpyruvate: step 3/7. Functionally, involved in the third step of the chorismate pathway, which leads to the biosynthesis of aromatic amino acids. Catalyzes the cis-dehydration of 3-dehydroquinate (DHQ) and introduces the first double bond of the aromatic ring to yield 3-dehydroshikimate. The protein is 3-dehydroquinate dehydratase of Methanococcus vannielii (strain ATCC 35089 / DSM 1224 / JCM 13029 / OCM 148 / SB).